Reading from the N-terminus, the 466-residue chain is Gamma-aminobutyric acid permease (466 aa).

Residues 2–20 lie on the Cytoplasmic side of the membrane; that stretch reads GQSSQPHELGGGLKSRHVT. The next 2 membrane-spanning stretches (helical) occupy residues 21 to 41 and 42 to 62; these read MLSI…VAIA and EAGP…VMIM. Residues 63–96 are Cytoplasmic-facing; it reads RMLAEMAVATPDTGSFSTYADKAIGRWAGYTIGW. The helical transmembrane segment at 97-117 threads the bilayer; that stretch reads LYWWFWVLVIPLEANIAAMIL. Histidine 118 is a topological domain (periplasmic). The chain crosses the membrane as a helical span at residues 119-139; it reads SWVPGIPIWLFSLVITLALTG. Over 140–153 the chain is Cytoplasmic; it reads SNLLSVKNYGEFEF. A helical transmembrane segment spans residues 154 to 174; that stretch reads WLALCKVIAILAFIFLGAVAI. Residues 175–199 lie on the Periplasmic side of the membrane; that stretch reads SGFYPYAEVSGISRLWDSGGFMPNG. Residues 200–220 form a helical membrane-spanning segment; the sequence is FGAVLSAMLITMFSFMGAEIV. Topologically, residues 221 to 246 are cytoplasmic; the sequence is TIAAAESDTPEKHIVRATNSVIWRIS. Residues 247–267 traverse the membrane as a helical segment; the sequence is IFYLCSIFVVVALIPWNMPGL. Topologically, residues 268 to 286 are periplasmic; that stretch reads KAVGSYRSVLELLNIPHAK. Residues 287–307 form a helical membrane-spanning segment; the sequence is LIMDCVILLSVTSCLNSALYT. Residues 308 to 334 are Cytoplasmic-facing; it reads ASRMLYSLSRRGDAPAVMGKINRSKTP. Residues 335–355 form a helical membrane-spanning segment; that stretch reads YVAVLLSTGAAFLTVVVNYYA. Over 356 to 358 the chain is Periplasmic; the sequence is PAK. Residues 359-379 traverse the membrane as a helical segment; it reads VFKFLIDSSGAIALLVYLVIA. Residues 380-402 lie on the Cytoplasmic side of the membrane; sequence VSQLRMRKILRAEGSEIRLRMWL. A helical membrane pass occupies residues 403-423; it reads YPWLTWLVIGFITFVLVVMLF. Residues 424-428 lie on the Periplasmic side of the membrane; sequence RPAQQ. A helical membrane pass occupies residues 429-449; the sequence is LEVISTGLLAIGIICTVPIMA. Topologically, residues 450–466 are cytoplasmic; the sequence is RWKKLVLWQKTPVHNTR.

Belongs to the amino acid-polyamine-organocation (APC) superfamily. Amino acid transporter (AAT) (TC 2.A.3.1) family. As to quaternary structure, monomer.

Its subcellular location is the cell inner membrane. The enzyme catalyses 4-aminobutanoate(in) + H(+)(in) = 4-aminobutanoate(out) + H(+)(out). Its pathway is amino-acid degradation; 4-aminobutanoate degradation. Uptake is stimulated by ammonium sulfate and abolished by 2,4-dinitrophenol. Is affected both topologically and kinetically by phospholipid composition of the membrane. In cells lacking phosphatidylethanolamine (PE), the N-terminal hairpin is inverted relative to the membrane and the rate of GABA transport is reduced by more than 99%. Its function is as follows. Transporter for gamma-aminobutyrate (GABA). Transport is driven by the membrane potential. Can also transport a number of GABA analogs such as nipecotic acid or muscimol. The chain is Gamma-aminobutyric acid permease from Escherichia coli (strain K12).